The following is an 874-amino-acid chain: Alanine--tRNA ligase (874 aa).

4 residues coordinate Zn(2+): histidine 563, histidine 567, cysteine 665, and histidine 669.

The protein belongs to the class-II aminoacyl-tRNA synthetase family. The cofactor is Zn(2+).

The protein localises to the cytoplasm. It carries out the reaction tRNA(Ala) + L-alanine + ATP = L-alanyl-tRNA(Ala) + AMP + diphosphate. Its function is as follows. Catalyzes the attachment of alanine to tRNA(Ala) in a two-step reaction: alanine is first activated by ATP to form Ala-AMP and then transferred to the acceptor end of tRNA(Ala). Also edits incorrectly charged Ser-tRNA(Ala) and Gly-tRNA(Ala) via its editing domain. This chain is Alanine--tRNA ligase, found in Haemophilus influenzae (strain 86-028NP).